The sequence spans 227 residues: MNSVEFPLLDRRTKNSVISTTSNDLSNWSRLSSLWPLLYGTSCCFIEFASLIGSRFDFDRYGLVPRSSPRQADLVLTAGTVTMKMAPSLVRLYEQMPEPKYVIAMGACTITGGMFSTDSYSTVRGVDKLIPVDVYLPGCPPKPEAVIDAITKLRKKISREIYEDRVRSQRVNRYFTTNHKFLIGRSIHIGNSDKGFLYQPPATSKLPAEKFFKYKSSAPSPSHELVN.

Positions 43, 44, 108, and 139 each coordinate [4Fe-4S] cluster.

It belongs to the complex I 20 kDa subunit family. As to quaternary structure, NDH is composed of at least 16 different subunits, 5 of which are encoded in the nucleus. The cofactor is [4Fe-4S] cluster.

The protein resides in the plastid. It is found in the chloroplast thylakoid membrane. The catalysed reaction is a plastoquinone + NADH + (n+1) H(+)(in) = a plastoquinol + NAD(+) + n H(+)(out). It carries out the reaction a plastoquinone + NADPH + (n+1) H(+)(in) = a plastoquinol + NADP(+) + n H(+)(out). NDH shuttles electrons from NAD(P)H:plastoquinone, via FMN and iron-sulfur (Fe-S) centers, to quinones in the photosynthetic chain and possibly in a chloroplast respiratory chain. The immediate electron acceptor for the enzyme in this species is believed to be plastoquinone. Couples the redox reaction to proton translocation, and thus conserves the redox energy in a proton gradient. This Pelargonium hortorum (Common geranium) protein is NAD(P)H-quinone oxidoreductase subunit K, chloroplastic.